A 351-amino-acid chain; its full sequence is DNA integrity scanning protein DisA (351 aa).

Residues 4-142 enclose the DAC domain; sequence RSGFWQVLQQ…GPMKYILRDF (139 aa). Residues glycine 71, leucine 89, and 102 to 106 each bind ATP; that span reads TRHRT.

It belongs to the DisA family. Homooctamer. Mg(2+) serves as cofactor.

The catalysed reaction is 2 ATP = 3',3'-c-di-AMP + 2 diphosphate. In terms of biological role, participates in a DNA-damage check-point that is active prior to asymmetric division when DNA is damaged. DisA forms globular foci that rapidly scan along the chromosomes during sporulation, searching for lesions. When a lesion is present, DisA pauses at the lesion site. This triggers a cellular response that culminates in a temporary block in sporulation initiation. Functionally, also has diadenylate cyclase activity, catalyzing the condensation of 2 ATP molecules into cyclic di-AMP (c-di-AMP). c-di-AMP acts as a signaling molecule that couples DNA integrity with progression of sporulation. The rise in c-di-AMP level generated by DisA while scanning the chromosome, operates as a positive signal that advances sporulation; upon encountering a lesion, the DisA focus arrests at the damaged site and halts c-di-AMP synthesis. This Symbiobacterium thermophilum (strain DSM 24528 / JCM 14929 / IAM 14863 / T) protein is DNA integrity scanning protein DisA.